We begin with the raw amino-acid sequence, 72 residues long: Translation initiation factor IF-1 (72 aa).

An S1-like domain is found at 1–72 (MAKEDTLEFP…TKGRINYRFK (72 aa)).

This sequence belongs to the IF-1 family. As to quaternary structure, component of the 30S ribosomal translation pre-initiation complex which assembles on the 30S ribosome in the order IF-2 and IF-3, IF-1 and N-formylmethionyl-tRNA(fMet); mRNA recruitment can occur at any time during PIC assembly.

The protein resides in the cytoplasm. In terms of biological role, one of the essential components for the initiation of protein synthesis. Stabilizes the binding of IF-2 and IF-3 on the 30S subunit to which N-formylmethionyl-tRNA(fMet) subsequently binds. Helps modulate mRNA selection, yielding the 30S pre-initiation complex (PIC). Upon addition of the 50S ribosomal subunit IF-1, IF-2 and IF-3 are released leaving the mature 70S translation initiation complex. In Roseobacter denitrificans (strain ATCC 33942 / OCh 114) (Erythrobacter sp. (strain OCh 114)), this protein is Translation initiation factor IF-1.